An 88-amino-acid chain; its full sequence is Small ribosomal subunit protein uS15c (88 aa).

Belongs to the universal ribosomal protein uS15 family. Part of the 30S ribosomal subunit.

It is found in the plastid. The protein resides in the chloroplast. This is Small ribosomal subunit protein uS15c (rps15) from Pinus thunbergii (Japanese black pine).